The primary structure comprises 495 residues: Phenylalanine--tRNA ligase alpha subunit (495 aa).

Residues T338, 377 to 379 (QLE), and Y417 contribute to the L-phenylalanine site. E419 serves as a coordination point for Mg(2+). F442 is an L-phenylalanine binding site.

The protein belongs to the class-II aminoacyl-tRNA synthetase family. Phe-tRNA synthetase alpha subunit type 2 subfamily. As to quaternary structure, tetramer of two alpha and two beta subunits. Mg(2+) serves as cofactor.

It is found in the cytoplasm. It carries out the reaction tRNA(Phe) + L-phenylalanine + ATP = L-phenylalanyl-tRNA(Phe) + AMP + diphosphate + H(+). This is Phenylalanine--tRNA ligase alpha subunit from Methanosarcina mazei (strain ATCC BAA-159 / DSM 3647 / Goe1 / Go1 / JCM 11833 / OCM 88) (Methanosarcina frisia).